The following is a 92-amino-acid chain: uncharacterized protein (92 aa).

The first 23 residues, 1–23 (MNPAIVVIIVLLVAALLIWACKA), serve as a signal peptide directing secretion.

This is an uncharacterized protein from Acheta domesticus (House cricket).